A 330-amino-acid chain; its full sequence is tRNA U34 carboxymethyltransferase (330 aa).

Carboxy-S-adenosyl-L-methionine-binding positions include K91, W105, K110, G130, 152–154 (DPS), 181–182 (IE), M196, Y200, and R315.

Belongs to the class I-like SAM-binding methyltransferase superfamily. CmoB family. Homotetramer.

It catalyses the reaction carboxy-S-adenosyl-L-methionine + 5-hydroxyuridine(34) in tRNA = 5-carboxymethoxyuridine(34) in tRNA + S-adenosyl-L-homocysteine + H(+). Catalyzes carboxymethyl transfer from carboxy-S-adenosyl-L-methionine (Cx-SAM) to 5-hydroxyuridine (ho5U) to form 5-carboxymethoxyuridine (cmo5U) at position 34 in tRNAs. This is tRNA U34 carboxymethyltransferase from Shewanella piezotolerans (strain WP3 / JCM 13877).